A 228-amino-acid chain; its full sequence is UPF0758 protein CLI_3057 (228 aa).

The 123-residue stretch at 106 to 228 folds into the MPN domain; the sequence is KINTPLDVSN…YVSMKEKGTI (123 aa). The Zn(2+) site is built by His177, His179, and Asp190. The short motif at 177–190 is the JAMM motif element; that stretch reads HNHPSGDPTPSKED.

This sequence belongs to the UPF0758 family.

The polypeptide is UPF0758 protein CLI_3057 (Clostridium botulinum (strain Langeland / NCTC 10281 / Type F)).